The primary structure comprises 204 residues: Holliday junction branch migration complex subunit RuvA (204 aa).

The domain I stretch occupies residues 1–64 (MIGKLKGTLE…EEAIRLFGFA (64 aa)). Positions 65-143 (TRAEQEWFCM…PFEQAVKTVS (79 aa)) are domain II. The tract at residues 144–154 (VPQREITHQPA) is flexible linker. The segment at 154-204 (AHDALSALMKLGFEREQAARALALAMNALEGEAVSSALLIRHSLKLLSSPT) is domain III.

This sequence belongs to the RuvA family. As to quaternary structure, homotetramer. Forms an RuvA(8)-RuvB(12)-Holliday junction (HJ) complex. HJ DNA is sandwiched between 2 RuvA tetramers; dsDNA enters through RuvA and exits via RuvB. An RuvB hexamer assembles on each DNA strand where it exits the tetramer. Each RuvB hexamer is contacted by two RuvA subunits (via domain III) on 2 adjacent RuvB subunits; this complex drives branch migration. In the full resolvosome a probable DNA-RuvA(4)-RuvB(12)-RuvC(2) complex forms which resolves the HJ.

It is found in the cytoplasm. Its function is as follows. The RuvA-RuvB-RuvC complex processes Holliday junction (HJ) DNA during genetic recombination and DNA repair, while the RuvA-RuvB complex plays an important role in the rescue of blocked DNA replication forks via replication fork reversal (RFR). RuvA specifically binds to HJ cruciform DNA, conferring on it an open structure. The RuvB hexamer acts as an ATP-dependent pump, pulling dsDNA into and through the RuvAB complex. HJ branch migration allows RuvC to scan DNA until it finds its consensus sequence, where it cleaves and resolves the cruciform DNA. In Bartonella tribocorum (strain CIP 105476 / IBS 506), this protein is Holliday junction branch migration complex subunit RuvA.